Reading from the N-terminus, the 838-residue chain is V-type proton ATPase 116 kDa subunit a 1 (838 aa).

At 1–388 (MGELFRSEEM…DAYGIGTYRE (388 aa)) the chain is on the cytoplasmic side. 2 positions are modified to phosphothreonine: T250 and T360. Y364 carries the post-translational modification Phosphotyrosine. A helical transmembrane segment spans residues 389–407 (INPAPYTIITFPFLFAVMF). Residues 408-409 (GD) lie on the Vacuolar side of the membrane. Residues 410–426 (LGHGILMTLFAVWMVLK) form a helical membrane-spanning segment. Over 427-441 (ESRILSQKNENEMFS) the chain is Cytoplasmic. Residues 442-471 (TIFSGRYIILLMGVFSIYTGLIYNDCFSKS) traverse the membrane as a helical segment. Residues 472–535 (LNIFGSSWSV…ATNKLTFLNS (64 aa)) lie on the Vacuolar side of the membrane. Residues 536–555 (FKMKMSVILGIIHMLFGVSL) traverse the membrane as a helical segment. Residues 556 to 573 (SLFNHTYFKKPLNIYFGF) lie on the Cytoplasmic side of the membrane. The chain crosses the membrane as a helical span at residues 574-594 (IPEIIFMTSLFGYLVILIFYK). At 595-639 (WTAYNAKTSEKAPSLLIHFINMFLFSYGDSGNSMLYSGQKGIQCF) the chain is on the vacuolar side. The helical transmembrane segment at 640 to 659 (LVVVALLCVPWMLLFKPLVL) threads the bilayer. The Cytoplasmic segment spans residues 660–725 (RRQYLRRKHL…DTMVHQAIHT (66 aa)). A helical transmembrane segment spans residues 726-750 (IEYCLGCISNTASYLRLWALSLAHA). At 751-771 (QLSEVLWTMVIHIGLKVKSLA) the chain is on the vacuolar side. Residues 772–810 (GGLALFFIFAAFATLTVAILLIMEGLSAFLHALRLHWVE) form a helical membrane-spanning segment. Over 811–838 (FQNKFYSGTGFKFLPFSFEHIREGKFDD) the chain is Cytoplasmic.

Belongs to the V-ATPase 116 kDa subunit family. In terms of assembly, V-ATPase is a heteromultimeric enzyme made up of two complexes: the ATP-hydrolytic V1 complex and the proton translocation V0 complex. The V1 complex consists of three catalytic AB heterodimers that form a heterohexamer, three peripheral stalks each consisting of EG heterodimers, one central rotor including subunits D and F, and the regulatory subunits C and H. The proton translocation complex V0 consists of the proton transport subunit a, a ring of proteolipid subunits c9c'', rotary subunit d, subunits e and f, and the accessory subunits ATP6AP1/Ac45 and ATP6AP2/PRR. Interacts with SPAAR. In terms of tissue distribution, expressed in brain (at protein level). As to expression, expressed heart, kidney, liver, spleen, and to a lesser extent in brain.

The protein localises to the cytoplasmic vesicle. The protein resides in the clathrin-coated vesicle membrane. It is found in the secretory vesicle. It localises to the synaptic vesicle membrane. Its subcellular location is the melanosome. Its function is as follows. Subunit of the V0 complex of vacuolar(H+)-ATPase (V-ATPase), a multisubunit enzyme composed of a peripheral complex (V1) that hydrolyzes ATP and a membrane integral complex (V0) that translocates protons. V-ATPase is responsible for the acidification of various organelles, such as lysosomes, endosomes, the trans-Golgi network, and secretory granules, including synaptic vesicles. In certain cell types, can be exported to the plasma membrane, where it is involved in the acidification of the extracellular environment. Required for assembly and activity of the vacuolar ATPase. Through its action on compartment acidification, plays an essential role in neuronal development in terms of integrity and connectivity of neurons. The protein is V-type proton ATPase 116 kDa subunit a 1 (ATP6V0A1) of Bos taurus (Bovine).